We begin with the raw amino-acid sequence, 367 residues long: Anhydro-N-acetylmuramic acid kinase (367 aa).

13–20 (GTSMDGAD) serves as a coordination point for ATP.

It belongs to the anhydro-N-acetylmuramic acid kinase family.

The catalysed reaction is 1,6-anhydro-N-acetyl-beta-muramate + ATP + H2O = N-acetyl-D-muramate 6-phosphate + ADP + H(+). The protein operates within amino-sugar metabolism; 1,6-anhydro-N-acetylmuramate degradation. It participates in cell wall biogenesis; peptidoglycan recycling. Its function is as follows. Catalyzes the specific phosphorylation of 1,6-anhydro-N-acetylmuramic acid (anhMurNAc) with the simultaneous cleavage of the 1,6-anhydro ring, generating MurNAc-6-P. Is required for the utilization of anhMurNAc either imported from the medium or derived from its own cell wall murein, and thus plays a role in cell wall recycling. The sequence is that of Anhydro-N-acetylmuramic acid kinase from Neisseria gonorrhoeae (strain ATCC 700825 / FA 1090).